The following is a 356-amino-acid chain: UDP-N-acetylglucosamine--N-acetylmuramyl-(pentapeptide) pyrophosphoryl-undecaprenol N-acetylglucosamine transferase (356 aa).

Residues Ser195 and Gln287 each contribute to the UDP-N-acetyl-alpha-D-glucosamine site.

This sequence belongs to the glycosyltransferase 28 family. MurG subfamily.

Its subcellular location is the cell membrane. It catalyses the reaction Mur2Ac(oyl-L-Ala-gamma-D-Glu-L-Lys-D-Ala-D-Ala)-di-trans,octa-cis-undecaprenyl diphosphate + UDP-N-acetyl-alpha-D-glucosamine = beta-D-GlcNAc-(1-&gt;4)-Mur2Ac(oyl-L-Ala-gamma-D-Glu-L-Lys-D-Ala-D-Ala)-di-trans,octa-cis-undecaprenyl diphosphate + UDP + H(+). The protein operates within cell wall biogenesis; peptidoglycan biosynthesis. In terms of biological role, cell wall formation. Catalyzes the transfer of a GlcNAc subunit on undecaprenyl-pyrophosphoryl-MurNAc-pentapeptide (lipid intermediate I) to form undecaprenyl-pyrophosphoryl-MurNAc-(pentapeptide)GlcNAc (lipid intermediate II). This chain is UDP-N-acetylglucosamine--N-acetylmuramyl-(pentapeptide) pyrophosphoryl-undecaprenol N-acetylglucosamine transferase, found in Streptococcus sanguinis (strain SK36).